Here is a 182-residue protein sequence, read N- to C-terminus: T-cell surface glycoprotein CD3 gamma chain (182 aa).

The N-terminal stretch at 1 to 22 (MEQGKGLAVLILAIILLQGTLA) is a signal peptide. Residues 23-116 (QSIKGNHLVK…CIELNAATIS (94 aa)) lie on the Extracellular side of the membrane. An Ig-like domain is found at 37–94 (QEDGSVLLTCDAEAKNITWFKDGKMIGFLTEDKKKWNLGSNAKDPRGMYQCKGSQNKS). A disulfide bridge links C46 with C87. Residues N52 and N92 are each glycosylated (N-linked (GlcNAc...) asparagine). A helical transmembrane segment spans residues 117-137 (GFLFAEIVSIFVLAVGVYFIA). Residues 138–182 (GQDGVRQSRASDKQTLLPNDQLYQPLKDREDDQYSHLQGNQLRRN) lie on the Cytoplasmic side of the membrane. A Phosphoserine modification is found at S145. Residue S148 is modified to Phosphoserine; by PKC. In terms of domain architecture, ITAM spans 149–177 (DKQTLLPNDQLYQPLKDREDDQYSHLQGN). A Di-leucine motif motif is present at residues 153-154 (LL).

In terms of assembly, the TCR-CD3 complex is composed of a CD3D/CD3E and a CD3G/CD3E heterodimers that preferentially associate with TCRalpha and TCRbeta, respectively, to form TCRalpha/CD3E/CD3G and TCRbeta/CD3G/CD3E trimers. In turn, the hexamer interacts with CD3Z homodimer to form the TCR-CD3 complex. Alternatively, TCRalpha and TCRbeta can be replaced by TCRgamma and TCRdelta. Post-translationally, phosphorylated on Tyr residues after T-cell receptor triggering by LCK in association with CD4/CD8. Phosphorylated also by PKC; leading to the TCR complex down-regulation. In terms of processing, phosphorylated on Tyr residues after T-cell receptor triggering by LCK in association with CD4/CD8.

The protein localises to the cell membrane. Part of the TCR-CD3 complex present on T-lymphocyte cell surface that plays an essential role in adaptive immune response. When antigen presenting cells (APCs) activate T-cell receptor (TCR), TCR-mediated signals are transmitted across the cell membrane by the CD3 chains CD3D, CD3E, CD3G and CD3Z. All CD3 chains contain immunoreceptor tyrosine-based activation motifs (ITAMs) in their cytoplasmic domain. Upon TCR engagement, these motifs become phosphorylated by Src family protein tyrosine kinases LCK and FYN, resulting in the activation of downstream signaling pathways. In addition to this role of signal transduction in T-cell activation, CD3G plays an essential role in the dynamic regulation of TCR expression at the cell surface. Indeed, constitutive TCR cycling is dependent on the di-leucine-based (diL) receptor-sorting motif present in CD3G. This is T-cell surface glycoprotein CD3 gamma chain (CD3G) from Homo sapiens (Human).